A 150-amino-acid chain; its full sequence is MLKKDATYYIVEESVLPEVFLKVIKAKELLEKGEVKAVNEAVRLVGISRSAFYKYKDCIFPFFESSRGKIITLALVLQDVPGILSKILNIISDTNANILTINQNIPLGGIATVTISIRTSDMTKSVKELIQEIERVDGVKKIEILGREEY.

Residues 72-147 enclose the ACT domain; sequence TLALVLQDVP…GVKKIEILGR (76 aa).

This sequence belongs to the UPF0735 family.

This chain is UPF0735 ACT domain-containing protein Csac_0995, found in Caldicellulosiruptor saccharolyticus (strain ATCC 43494 / DSM 8903 / Tp8T 6331).